Here is a 997-residue protein sequence, read N- to C-terminus: MAVAEFVFCWPLFELAIVLLVAPIHAAQRHTASDNPSTYNIGGVLSNSDSEEHFSTTIKHLNFDQQYVPRKVTYYDKTIRMDKNPIKTVFNVCDKLIENRVYAVVVSHEQTSGDLSPAAVSYTSGFYSIPVIGISSRDAAFSDKNIHVSFLRTVPPYYHQADVWLEMLSHFAYTKVIIIHSSDTDGRAILGRFQTTSQTYYDDVDVRATVELIVEFEPKLESFTEHLIDMKTAQSRVYLMYASTEDAQVIFRDAGEYNMTGEGHVWIVTEQALFSNNTPDGVLGLQLEHAHSDKGHIRDSVYVLASAIKEMISNETIAEAPKDCGDSAVNWESGKRLFQYLKSRNITGETGQVAFDDNGDRIYAGYDVINIREQQKKHVVGKFSYDSMRAKMRMRINDSEIIWPGKQRRKPEGIMIPTHLKLLTIEEKPFVYVRRMGDDEFRCEPDERPCPLFNNSDATANEFCCRGYCIDLLIELSKRINFTYDLALSPDGQFGHYILRNSTGAMTLRKEWTGLIGELVNERADMIVAPLTINPERAEYIEFSKPFKYQGITILEKKPSRSSTLVSFLQPFSNTLWILVMVSVHVVALVLYLLDRFSPFGRFKLSHSDSNEEKALNLSSAVWFAWGVLLNSGIGEGTPRSFSARVLGMVWAGFAMIIVASYTANLAAFLVLERPKTKLSGINDARLRNTMENLTCATVKGSSVDMYFRRQVELSNMYRTMEANNYATAEQAIQDVKKGKLMAFIWDSSRLEYEASKDCELVTAGELFGRSGYGIGLQKGSPWTDAVTLAILEFHESGFMEKLDKQWIFHGHVQQNCELFEKTPNTLGLKNMAGVFILVGVGIAGGVGLIIIEVIYKKHQVKKQKRLDIARHAADKWRGTIEKRKTIRASLAMQRQYNVGLNSTHAPGTISLAVDKRRYPRLGQRLGPERAWPGDAADVLRIRRPYELGKPGQSPKVMSANQPGMPMPMLGKTRPQQSVLPPRYSPGYTSDVSHLVV.

The N-terminal stretch at 1–26 is a signal peptide; it reads MAVAEFVFCWPLFELAIVLLVAPIHA. Over 27-573 the chain is Extracellular; that stretch reads AQRHTASDNP…TLVSFLQPFS (547 aa). Asparagine 258, asparagine 314, asparagine 345, asparagine 397, asparagine 454, asparagine 481, and asparagine 501 each carry an N-linked (GlcNAc...) asparagine glycan. Glycine-binding positions include 530-532 and arginine 537; that span reads PLT. A helical transmembrane segment spans residues 574-594; it reads NTLWILVMVSVHVVALVLYLL. Residues 595-651 are Cytoplasmic-facing; it reads DRFSPFGRFKLSHSDSNEEKALNLSSAVWFAWGVLLNSGIGEGTPRSFSARVLGMVW. Residues 652 to 672 traverse the membrane as a helical segment; that stretch reads AGFAMIIVASYTANLAAFLVL. Residues 673–831 are Extracellular-facing; that stretch reads ERPKTKLSGI…KTPNTLGLKN (159 aa). Asparagine 693 carries N-linked (GlcNAc...) asparagine glycosylation. Glycine contacts are provided by serine 703 and aspartate 747. The helical transmembrane segment at 832-852 threads the bilayer; it reads MAGVFILVGVGIAGGVGLIII. Topologically, residues 853 to 997 are cytoplasmic; it reads EVIYKKHQVK…YTSDVSHLVV (145 aa). The interval 947–997 is disordered; that stretch reads ELGKPGQSPKVMSANQPGMPMPMLGKTRPQQSVLPPRYSPGYTSDVSHLVV. Polar residues predominate over residues 987-997; that stretch reads GYTSDVSHLVV.

This sequence belongs to the glutamate-gated ion channel (TC 1.A.10.1) family. As to quaternary structure, forms a heteromeric NMDA channel with Nmdar2.

The protein localises to the cell membrane. The protein resides in the postsynaptic cell membrane. It localises to the postsynaptic density. Its function is as follows. NMDA receptor subtype of glutamate-gated ion channels with high calcium permeability and voltage-dependent sensitivity to magnesium. Mediated by glycine. This protein plays a key role in synaptic plasticity, synaptogenesis, excitotoxicity, memory acquisition and learning. It mediates neuronal functions in glutamate neurotransmission. Is involved in the cell surface targeting of NMDA receptors. Plays a role in associative learning and in long-term memory consolidation. In Drosophila erecta (Fruit fly), this protein is Glutamate [NMDA] receptor subunit 1.